A 310-amino-acid chain; its full sequence is Nucleotide-binding protein Mmc1_3333 (310 aa).

An ATP-binding site is contributed by 19–26 (GLSGAGKS).

The protein belongs to the RapZ-like family.

Displays ATPase and GTPase activities. The polypeptide is Nucleotide-binding protein Mmc1_3333 (Magnetococcus marinus (strain ATCC BAA-1437 / JCM 17883 / MC-1)).